We begin with the raw amino-acid sequence, 549 residues long: Probable protein kinase UbiB (549 aa).

Residues 123 to 501 enclose the Protein kinase domain; the sequence is DFNETPLASA…QQQAHKSNYL (379 aa). Residues 129-137 and lysine 152 contribute to the ATP site; that span reads LASASISQV. Catalysis depends on aspartate 287, which acts as the Proton acceptor. Transmembrane regions (helical) follow at residues 496–516 and 520–540; these read HKSN…TLLI and ATLW…FVGW.

Belongs to the ABC1 family. UbiB subfamily.

The protein resides in the cell inner membrane. The protein operates within cofactor biosynthesis; ubiquinone biosynthesis [regulation]. Is probably a protein kinase regulator of UbiI activity which is involved in aerobic coenzyme Q (ubiquinone) biosynthesis. The sequence is that of Probable protein kinase UbiB from Shewanella baltica (strain OS185).